The primary structure comprises 1423 residues: Protein phosphatase Slingshot homolog 2 (1423 aa).

Residues 1–37 (MALVTVQRSPTPSTTSSPCASEADSGEEECRSQPRSI) are disordered. Over residues 9-18 (SPTPSTTSSP) the composition is skewed to low complexity. Phosphoserine occurs at positions 17, 25, and 36. The DEK-C domain occupies 248–303 (ERTERLIKTKLREIMMQKDLENITSKEIRTELEMQMVCNLREFKEFIDNEMIVILG). The 142-residue stretch at 307–448 (SPTQIFEHVF…LEEYQGILLA (142 aa)) folds into the Tyrosine-protein phosphatase domain. Cys-392 serves as the catalytic Phosphocysteine intermediate. Residues Ser-461, Ser-487, Ser-534, Ser-631, and Ser-633 each carry the phosphoserine modification. Disordered stretches follow at residues 617-641 (TSPL…CQTE), 664-684 (QETR…GGRN), 696-728 (PSKV…QSKA), 797-825 (ENKP…MCNP), 840-862 (EGEP…AKWY), 877-954 (LRQE…NATV), 962-981 (FDHL…TQQE), 1019-1041 (TSPN…EQGL), 1070-1108 (SLHP…SSLS), and 1144-1179 (TEQS…YKDS). Positions 621 to 635 (KDPPMSPDPESPSPQ) are enriched in pro residues. Over residues 664 to 680 (QETRSRSFSHSRMEELG) the composition is skewed to basic and acidic residues. The segment covering 889–904 (TCTSLSTRKNSKNDSS) has biased composition (polar residues). Positions 910-932 (PKGKSDEAPPEHSFVLKEPEMSK) are enriched in basic and acidic residues. Residues 941–953 (EAGSLSHSEQNAT) are compositionally biased toward polar residues. Polar residues predominate over residues 1019 to 1034 (TSPNHTGPGSEIATSE). Over residues 1144–1172 (TEQSSTTDEPSAEQVSWEESQESPLSSGS) the composition is skewed to polar residues. Ser-1217 is modified (phosphoserine). Position 1422 is a phosphothreonine (Thr-1422).

The protein belongs to the protein-tyrosine phosphatase family. Interacts with filamentous actin.

Its subcellular location is the cytoplasm. The protein localises to the cytoskeleton. It localises to the cell junction. It is found in the focal adhesion. The protein resides in the cytoplasmic vesicle. Its subcellular location is the secretory vesicle. The protein localises to the acrosome. The enzyme catalyses O-phospho-L-tyrosyl-[protein] + H2O = L-tyrosyl-[protein] + phosphate. It carries out the reaction O-phospho-L-seryl-[protein] + H2O = L-seryl-[protein] + phosphate. It catalyses the reaction O-phospho-L-threonyl-[protein] + H2O = L-threonyl-[protein] + phosphate. Its function is as follows. Protein phosphatase which regulates actin filament dynamics. Dephosphorylates and activates the actin binding/depolymerizing factor cofilin, which subsequently binds to actin filaments and stimulates their disassembly. Inhibitory phosphorylation of cofilin is mediated by LIMK1, which may also be dephosphorylated and inactivated by this protein. Required for spermatogenesis. Involved in acrosome biogenesis, probably by regulating cofilin-mediated actin cytoskeleton remodeling during proacrosomal vesicle fusion and/or Golgi to perinuclear vesicle trafficking. The polypeptide is Protein phosphatase Slingshot homolog 2 (SSH2) (Homo sapiens (Human)).